Reading from the N-terminus, the 199-residue chain is Recombination protein RecR (199 aa).

The C4-type zinc finger occupies 58 to 73; it reads CSVCSNLTDIDPCPLC. A Toprim domain is found at 81-176; the sequence is TVICVVQDPR…KATRIAHGIP (96 aa).

This sequence belongs to the RecR family.

In terms of biological role, may play a role in DNA repair. It seems to be involved in an RecBC-independent recombinational process of DNA repair. It may act with RecF and RecO. This Ruminiclostridium cellulolyticum (strain ATCC 35319 / DSM 5812 / JCM 6584 / H10) (Clostridium cellulolyticum) protein is Recombination protein RecR.